The primary structure comprises 346 residues: NADH-ubiquinone oxidoreductase chain 2 (346 aa).

10 helical membrane passes run 25–45 (HWIL…PLIS), 52–72 (AIEA…LILF), 95–115 (CLIL…HFWF), 124–144 (LITA…LLLM), 149–169 (LNPA…GWMG), 178–196 (ILAF…IIIY), 200–219 (LTIL…FLSL), 247–267 (TLLS…WLII), 274–294 (EMTP…FFYL), and 326–346 (AILT…TTLV).

The protein belongs to the complex I subunit 2 family.

Its subcellular location is the mitochondrion inner membrane. The catalysed reaction is a ubiquinone + NADH + 5 H(+)(in) = a ubiquinol + NAD(+) + 4 H(+)(out). Functionally, core subunit of the mitochondrial membrane respiratory chain NADH dehydrogenase (Complex I) that is believed to belong to the minimal assembly required for catalysis. Complex I functions in the transfer of electrons from NADH to the respiratory chain. The immediate electron acceptor for the enzyme is believed to be ubiquinone. This chain is NADH-ubiquinone oxidoreductase chain 2 (MT-ND2), found in Coturnix japonica (Japanese quail).